The sequence spans 183 residues: Ubiquitin-conjugating enzyme E2 H (183 aa).

The region spanning 1-150 is the UBC core domain; that stretch reads MSSPSPGKRR…IKEYIQKYAT (150 aa). At K60 the chain carries N6-acetyllysine. The active-site Glycyl thioester intermediate is the C87. Residues 152–183 form a disordered region; it reads EALKEQEEGTGDSSSESSMSDFSEDEAQDMEL. Positions 163-172 are enriched in low complexity; sequence DSSSESSMSD. Positions 173 to 183 are enriched in acidic residues; it reads FSEDEAQDMEL.

The protein belongs to the ubiquitin-conjugating enzyme family. Interacts with MAEA and WDR26, components of the CTLH complex that contains GID4, RANBP9 and/or RANBP10, MKLN1, MAEA, RMND5A (or alternatively its paralog RMND5B), GID8, ARMC8, WDR26 and YPEL5. In terms of processing, autoubiquitinated in vitro in the presence of NEDD4L.

The catalysed reaction is S-ubiquitinyl-[E1 ubiquitin-activating enzyme]-L-cysteine + [E2 ubiquitin-conjugating enzyme]-L-cysteine = [E1 ubiquitin-activating enzyme]-L-cysteine + S-ubiquitinyl-[E2 ubiquitin-conjugating enzyme]-L-cysteine.. It catalyses the reaction S-ubiquitinyl-[E1 ubiquitin-activating enzyme]-L-cysteine + [acceptor protein]-L-lysine = [E1 ubiquitin-activating enzyme]-L-cysteine + N(6)-monoubiquitinyl-[acceptor protein]-L-lysine.. It participates in protein modification; protein ubiquitination. Accepts ubiquitin from the E1 complex and catalyzes its covalent attachment to other proteins. E2 ubiquitin conjugating enzyme that transfers ubiquitin to MAEA, a core component of the CTLH E3 ubiquitin-protein ligase complex. In vitro catalyzes 'Lys-11'- and 'Lys-48'-linked polyubiquitination. Capable, in vitro, to ubiquitinate histone H2A. This chain is Ubiquitin-conjugating enzyme E2 H (UBE2H), found in Homo sapiens (Human).